The chain runs to 238 residues: Uridylate kinase (238 aa).

Residue 12-15 (KLSG) participates in ATP binding. G54 is a UMP binding site. ATP is bound by residues G55 and R59. Residues D74 and 135–142 (TGNPFFTT) each bind UMP. ATP contacts are provided by T162, N163, Y168, and D171.

The protein belongs to the UMP kinase family. Homohexamer.

It localises to the cytoplasm. It carries out the reaction UMP + ATP = UDP + ADP. It participates in pyrimidine metabolism; CTP biosynthesis via de novo pathway; UDP from UMP (UMPK route): step 1/1. Inhibited by UTP. Functionally, catalyzes the reversible phosphorylation of UMP to UDP. This Rhodopseudomonas palustris (strain BisB18) protein is Uridylate kinase.